The sequence spans 427 residues: rRNA-processing protein EBP2 (427 aa).

Basic and acidic residues-rich tracts occupy residues 29–40 and 49–65; these read KKKSQELKKEEP and KKLE…KEVA. The tract at residues 29 to 190 is disordered; it reads KKKSQELKKE…FDSDADVVPH (162 aa). The stretch at 45–174 forms a coiled coil; it reads ASNLKKLEKK…KEEQEEEQDV (130 aa). Residues 79–88 show a composition bias toward basic residues; that stretch reads KEKRKLKKEL. Residues 89 to 105 show a composition bias toward basic and acidic residues; the sequence is KKMQEQDATEAQKHMSG. S104 carries the phosphoserine modification. Positions 106 to 126 are enriched in acidic residues; that stretch reads DEDESGDDREEEEEEEEEEEG. A compositionally biased stretch (basic and acidic residues) spans 127–138; the sequence is RLDLEKLAKSDS. Acidic residues-rich tracts occupy residues 139–155 and 163–185; these read ESED…EDED and EEKE…DSDA. Phosphoserine occurs at positions 177 and 183. 2 coiled-coil regions span residues 234 to 265 and 291 to 348; these read KDIY…KRLK and KLIE…KHNE. A disordered region spans residues 361–427; it reads EVEGKRFDRG…PGKSRRARRF (67 aa). Polar residues predominate over residues 397–407; the sequence is ATSSADVSGFS. Residues 409 to 427 are compositionally biased toward basic residues; it reads RKMKGKTNRPGKSRRARRF.

It belongs to the EBP2 family. As to quaternary structure, interacts with LOC1, NOP12, SIZ2, ULS1 and WSS1. Sumoylated.

It is found in the nucleus. The protein localises to the nucleolus. Required for the processing of the 27S pre-rRNA. Probably involved in the step of the processing of the 27 SA precursor into the 27 SB intermediate. This is rRNA-processing protein EBP2 (EBP2) from Saccharomyces cerevisiae (strain ATCC 204508 / S288c) (Baker's yeast).